The sequence spans 400 residues: Enoyl-[acyl-carrier-protein] reductase [NADH] (400 aa).

NAD(+) is bound by residues 48 to 53 (GASSGY), 74 to 75 (FE), 111 to 112 (DA), and 139 to 140 (LA). Position 225 (Tyr225) interacts with substrate. Tyr235 (proton donor) is an active-site residue. NAD(+)-binding positions include Lys244 and 273–275 (VVT).

It belongs to the TER reductase family. Monomer.

It catalyses the reaction a 2,3-saturated acyl-[ACP] + NAD(+) = a (2E)-enoyl-[ACP] + NADH + H(+). Its pathway is lipid metabolism; fatty acid biosynthesis. Its function is as follows. Involved in the final reduction of the elongation cycle of fatty acid synthesis (FAS II). Catalyzes the reduction of a carbon-carbon double bond in an enoyl moiety that is covalently linked to an acyl carrier protein (ACP). This Marinomonas sp. (strain MWYL1) protein is Enoyl-[acyl-carrier-protein] reductase [NADH].